A 397-amino-acid polypeptide reads, in one-letter code: Succinate--CoA ligase [ADP-forming] subunit beta (397 aa).

The region spanning Lys-9–Ala-254 is the ATP-grasp domain. ATP-binding positions include Lys-46, Gly-53–Gly-55, Glu-109, Ser-112, and Glu-117. Residues Asn-209 and Asp-223 each contribute to the Mg(2+) site. Substrate is bound by residues Asn-274 and Gly-331–Met-333.

The protein belongs to the succinate/malate CoA ligase beta subunit family. Heterotetramer of two alpha and two beta subunits. Mg(2+) is required as a cofactor.

It catalyses the reaction succinate + ATP + CoA = succinyl-CoA + ADP + phosphate. The catalysed reaction is GTP + succinate + CoA = succinyl-CoA + GDP + phosphate. It functions in the pathway carbohydrate metabolism; tricarboxylic acid cycle; succinate from succinyl-CoA (ligase route): step 1/1. Functionally, succinyl-CoA synthetase functions in the citric acid cycle (TCA), coupling the hydrolysis of succinyl-CoA to the synthesis of either ATP or GTP and thus represents the only step of substrate-level phosphorylation in the TCA. The beta subunit provides nucleotide specificity of the enzyme and binds the substrate succinate, while the binding sites for coenzyme A and phosphate are found in the alpha subunit. This Paracoccus denitrificans (strain Pd 1222) protein is Succinate--CoA ligase [ADP-forming] subunit beta.